We begin with the raw amino-acid sequence, 237 residues long: DNA repair protein RecO (237 aa).

Belongs to the RecO family.

Its function is as follows. Involved in DNA repair and RecF pathway recombination. The polypeptide is DNA repair protein RecO (Rickettsia akari (strain Hartford)).